Consider the following 326-residue polypeptide: Vitamin B12 import system permease protein BtuC (326 aa).

The next 9 membrane-spanning stretches (helical) occupy residues 15 to 35 (WLLC…CAGE), 61 to 81 (LAVL…QALF), 88 to 108 (PGLL…VLLG), 112 to 132 (LPNW…TLIL), 146 to 166 (LLAG…AIYF), 184 to 204 (GGVD…LLWI), 240 to 260 (GWMV…GLVI), 274 to 294 (VLLP…DIVA), and 302 to 322 (ELPI…WLLL).

Belongs to the binding-protein-dependent transport system permease family. FecCD subfamily. As to quaternary structure, the complex is composed of two ATP-binding proteins (BtuD), two transmembrane proteins (BtuC) and a solute-binding protein (BtuF).

It localises to the cell inner membrane. Functionally, part of the ABC transporter complex BtuCDF involved in vitamin B12 import. Involved in the translocation of the substrate across the membrane. The sequence is that of Vitamin B12 import system permease protein BtuC from Shigella boydii serotype 18 (strain CDC 3083-94 / BS512).